The sequence spans 214 residues: MISILGLDGFLQLVGMITIAIFALAFISFILILIISYILLKKNKLIFPSLALFLMDNLYSILLKIFLLIGTEDTFYRVGIEFYNKYYEDRFKKAKKRVLILPHCLRDTKCPAKLTPKGVECIFCNRCRVGEIIKVAEEKGYKVYIVPGSTFLKRILKEEKPEAVFGVACNRDLFYGMNMLSRKGIPSQGQPLLRDGCINTLVDVDELITRLKSL.

Helical transmembrane passes span 19-39 (IAIF…SYIL) and 50-70 (LALF…LLIG).

It is found in the cell membrane. This is an uncharacterized protein from Methanocaldococcus jannaschii (strain ATCC 43067 / DSM 2661 / JAL-1 / JCM 10045 / NBRC 100440) (Methanococcus jannaschii).